Here is a 1649-residue protein sequence, read N- to C-terminus: eIF-2-alpha kinase GCN2 (1649 aa).

Disordered stretches follow at residues 1–25 (MAGG…RQDH), 138–158 (NKPP…QEEQ), and 227–256 (HGGS…YSVC). Residues 25 to 137 (HELQALEAIY…YHVQSFLSEH (113 aa)) enclose the RWD domain. The stretch at 146 to 205 (HEEMLERRAQEEQQRLLEAKRKEEQEQREILHEIQRRKEEIKEEKKRKEMAKQERLEIAS) forms a coiled coil. At serine 230 the chain carries Phosphoserine. Positions 237–249 (GKHRANSSGRSRR) are enriched in basic residues. 2 consecutive Protein kinase domains span residues 296 to 539 (VYNA…HSFI) and 590 to 1001 (FEEL…SELL). ATP-binding positions include 596–604 (LGKGAFGAV) and lysine 619. Disordered regions lie at residues 660 to 750 (ERPA…QSFL) and 766 to 788 (ENSK…ESEP). Threonine 667 bears the Phosphothreonine mark. Positions 705-717 (LSSSVEWSTSGER) are enriched in polar residues. Over residues 731 to 740 (SDDEDDDEDE) the composition is skewed to acidic residues. Positions 778–787 (NEKNGCHESE) are enriched in basic and acidic residues. The active-site Proton acceptor is the aspartate 848. Threonine 871 carries the post-translational modification Phosphothreonine. Threonine 899 and threonine 904 each carry phosphothreonine; by autocatalysis. The tract at residues 1022 to 1493 (VDGKAYRTMM…DHVLQKLRTK (472 aa)) is histidyl-tRNA synthetase-like. N6-acetyllysine is present on lysine 1259.

This sequence belongs to the protein kinase superfamily. Ser/Thr protein kinase family. GCN2 subfamily. Homodimer; homodimerization is important for kinase activation by uncharged tRNAs. Interacts with GCN1; this interaction stimulates EIF2AK4/GCN2 kinase activity and is impaired by IMPACT upon a variety of stress conditions, such as amino acid depletion, UV-C irradiation, proteasome inhibitor treatment and glucose deprivation. Interacts with DNAJC3; this interaction inhibits EIF2AK4/GCN2 kinase activity during endoplasmic reticulum (ER), hypothermic and amino acid-starving stress conditions. Interacts with MAP3K20; activates EIF2AK4/GCN2 kinase activity in response to moderate ribotoxic stress. In terms of assembly, (Microbial infection) Interacts with hepatitis E virus (HEV) ORF1 protease; this interaction inhibits dimerization of EIF2AK4 and prevents EIF2AK4-mediated phosphorylation of EIF2A. Post-translationally, autophosphorylated; autophosphorylation on Thr-899 is increased upon amino acid starvation and in UV irradiation cells and inhibited in presence of IMPACT. Widely expressed. Expressed in lung, smooth muscle cells and macrophages.

It is found in the cytoplasm. It catalyses the reaction L-seryl-[protein] + ATP = O-phospho-L-seryl-[protein] + ADP + H(+). It carries out the reaction L-threonyl-[protein] + ATP = O-phospho-L-threonyl-[protein] + ADP + H(+). Metabolic-stress sensing protein kinase that phosphorylates the alpha subunit of eukaryotic translation initiation factor 2 (EIF2S1/eIF-2-alpha) in response to low amino acid availability. Plays a role as an activator of the integrated stress response (ISR) required for adaptation to amino acid starvation. EIF2S1/eIF-2-alpha phosphorylation in response to stress converts EIF2S1/eIF-2-alpha into a global protein synthesis inhibitor, leading to a global attenuation of cap-dependent translation, and thus to a reduced overall utilization of amino acids, while concomitantly initiating the preferential translation of ISR-specific mRNAs, such as the transcriptional activator ATF4, and hence allowing ATF4-mediated reprogramming of amino acid biosynthetic gene expression to alleviate nutrient depletion. Binds uncharged tRNAs. Required for the translational induction of protein kinase PRKCH following amino acid starvation. Involved in cell cycle arrest by promoting cyclin D1 mRNA translation repression after the unfolded protein response pathway (UPR) activation or cell cycle inhibitor CDKN1A/p21 mRNA translation activation in response to amino acid deprivation. Plays a role in the consolidation of synaptic plasticity, learning as well as formation of long-term memory. Plays a role in neurite outgrowth inhibition. Plays a proapoptotic role in response to glucose deprivation. Promotes global cellular protein synthesis repression in response to UV irradiation independently of the stress-activated protein kinase/c-Jun N-terminal kinase (SAPK/JNK) and p38 MAPK signaling pathways. Plays a role in the antiviral response against alphavirus infection; impairs early viral mRNA translation of the incoming genomic virus RNA, thus preventing alphavirus replication. In terms of biological role, (Microbial infection) Plays a role in modulating the adaptive immune response to yellow fever virus infection; promotes dendritic cells to initiate autophagy and antigene presentation to both CD4(+) and CD8(+) T-cells under amino acid starvation. This is eIF-2-alpha kinase GCN2 from Homo sapiens (Human).